A 263-amino-acid chain; its full sequence is Insertion sequence IS21-like putative ATP-binding protein (263 aa).

G114–T121 serves as a coordination point for ATP.

It belongs to the IS21/IS1162 putative ATP-binding protein family.

This chain is Insertion sequence IS21-like putative ATP-binding protein (tnpB), found in Bacteroides fragilis.